The following is a 236-amino-acid chain: Peroxisomal coenzyme A diphosphatase NUDT7 (236 aa).

An N6-succinyllysine modification is found at K20. The Nudix hydrolase domain maps to 37–169; sequence SNKFSVLVPL…QKQITQSGRD (133 aa). The short motif at 77–98 is the Nudix box element; it reads KRDPVDTDDTATALREAQEEVG. Mg(2+) is bound by residues E92 and E96. The residue at position 178 (K178) is an N6-succinyllysine. Residues 234–236 carry the Microbody targeting signal motif; that stretch reads SKL.

The protein belongs to the Nudix hydrolase family. PCD1 subfamily. Monomer. Requires Mn(2+) as cofactor. Mg(2+) is required as a cofactor. In terms of tissue distribution, highly expressed in liver, brown adipose tissue and heart. Expressed at intermediate level in lung and kidney and at low level in brain. Expressed in liver, brown adipose tissue and heart at 20 times lower levels than isoform 1.

The protein localises to the peroxisome. The enzyme catalyses hexanoyl-CoA + H2O = hexanoyl-4'-phosphopantetheine + adenosine 3',5'-bisphosphate + 2 H(+). It catalyses the reaction octanoyl-CoA + H2O = S-octanoyl-4'-phosphopantetheine + adenosine 3',5'-bisphosphate + 2 H(+). The catalysed reaction is butanoyl-CoA + H2O = S-butanoyl-4'-phosphopantetheine + adenosine 3',5'-bisphosphate + 2 H(+). It carries out the reaction decanoyl-CoA + H2O = decanoyl-4'-phosphopantetheine + adenosine 3',5'-bisphosphate + 2 H(+). The enzyme catalyses dodecanoyl-CoA + H2O = S-dodecanoyl-4'-phosphopantetheine + adenosine 3',5'-bisphosphate + 2 H(+). It catalyses the reaction tetradecanoyl-CoA + H2O = tetradecanoyl-4'-phosphopantetheine + adenosine 3',5'-bisphosphate + 2 H(+). The catalysed reaction is choloyl-CoA + H2O = S-choloyl-4'-phosphopantetheine + adenosine 3',5'-bisphosphate + 2 H(+). It carries out the reaction 3alpha,7alpha,12alpha-trihydroxy-5beta-cholestan-26-oyl-CoA + H2O = 3alpha,7alpha,12alpha-trihydroxy-5beta-cholestan-26-oyl-4'-phosphopantetheine + adenosine 3',5'-bisphosphate + 2 H(+). The enzyme catalyses acetyl-CoA + H2O = S-acetyl-4'-phosphopantetheine + adenosine 3',5'-bisphosphate + 2 H(+). It catalyses the reaction CoA + H2O = (R)-4'-phosphopantetheine + adenosine 3',5'-bisphosphate + 2 H(+). The catalysed reaction is propanoyl-CoA + H2O = propanoyl-4'-phosphopantetheine + adenosine 3',5'-bisphosphate + 2 H(+). It carries out the reaction malonyl-CoA + H2O = malonyl-4'-phosphopantetheine + adenosine 3',5'-bisphosphate + 2 H(+). The enzyme catalyses succinyl-CoA + H2O = succinyl-4'-phosphopantetheine + adenosine 3',5'-bisphosphate + 2 H(+). It catalyses the reaction a 5'-end CoA-ribonucleoside in mRNA + H2O = a 5'-end phospho-adenosine-phospho-ribonucleoside in mRNA + (R)-4'-phosphopantetheine + 2 H(+). With respect to regulation, inhibited by fluoride. Functionally, fatty acyl-coenzyme A (CoA) diphosphatase that hydrolyzes fatty acyl-CoA to yield acyl-4'-phosphopantetheine and adenosine 3',5'-bisphosphate. Cleaves CoA, CoA esters and oxidized CoA with similar efficiencies. Preferentially hydrolyzes medium-chain acyl-CoAs and bile acid-CoAs. Has no activity toward NDP-sugars, CDP-alcohols, (deoxy)nucleoside 5'-triphosphates, nucleoside 5'-di or monophosphates, diadenosine polyphosphates, NAD, NADH, NADP, NADPH or thymidine-5'-monophospho-p-nitrophenyl ester. May be required to eliminate oxidized CoA from peroxisomes, or regulate CoA and acyl-CoA levels in this organelle in response to metabolic demand. Does not play a role in U8 snoRNA decapping activity. Binds U8 snoRNA. Exhibits decapping activity towards dpCoA-capped RNAs in vitro. The chain is Peroxisomal coenzyme A diphosphatase NUDT7 from Mus musculus (Mouse).